Reading from the N-terminus, the 271-residue chain is Formamidopyrimidine-DNA glycosylase (271 aa).

The active-site Schiff-base intermediate with DNA is Pro2. Residue Glu3 is the Proton donor of the active site. Lys58 functions as the Proton donor; for beta-elimination activity in the catalytic mechanism. His92, Arg111, and Arg152 together coordinate DNA. Residues 237–271 (SVYGREGEACKQCGRVLKHATIGQRATVWCGSCQR) form an FPG-type zinc finger. The active-site Proton donor; for delta-elimination activity is Arg261.

Belongs to the FPG family. As to quaternary structure, monomer. The cofactor is Zn(2+).

It carries out the reaction Hydrolysis of DNA containing ring-opened 7-methylguanine residues, releasing 2,6-diamino-4-hydroxy-5-(N-methyl)formamidopyrimidine.. It catalyses the reaction 2'-deoxyribonucleotide-(2'-deoxyribose 5'-phosphate)-2'-deoxyribonucleotide-DNA = a 3'-end 2'-deoxyribonucleotide-(2,3-dehydro-2,3-deoxyribose 5'-phosphate)-DNA + a 5'-end 5'-phospho-2'-deoxyribonucleoside-DNA + H(+). Functionally, involved in base excision repair of DNA damaged by oxidation or by mutagenic agents. Acts as a DNA glycosylase that recognizes and removes damaged bases. Has a preference for oxidized purines, such as 7,8-dihydro-8-oxoguanine (8-oxoG). Has AP (apurinic/apyrimidinic) lyase activity and introduces nicks in the DNA strand. Cleaves the DNA backbone by beta-delta elimination to generate a single-strand break at the site of the removed base with both 3'- and 5'-phosphates. This chain is Formamidopyrimidine-DNA glycosylase, found in Xanthomonas euvesicatoria pv. vesicatoria (strain 85-10) (Xanthomonas campestris pv. vesicatoria).